The chain runs to 209 residues: Uracil phosphoribosyltransferase (209 aa).

Residues Arg79, Arg104, and 131-139 (DPMLATGGS) contribute to the 5-phospho-alpha-D-ribose 1-diphosphate site. Uracil-binding positions include Ile194 and 199 to 201 (GDA). Asp200 serves as a coordination point for 5-phospho-alpha-D-ribose 1-diphosphate.

This sequence belongs to the UPRTase family. The cofactor is Mg(2+).

The enzyme catalyses UMP + diphosphate = 5-phospho-alpha-D-ribose 1-diphosphate + uracil. It participates in pyrimidine metabolism; UMP biosynthesis via salvage pathway; UMP from uracil: step 1/1. Allosterically activated by GTP. In terms of biological role, catalyzes the conversion of uracil and 5-phospho-alpha-D-ribose 1-diphosphate (PRPP) to UMP and diphosphate. This Listeria innocua serovar 6a (strain ATCC BAA-680 / CLIP 11262) protein is Uracil phosphoribosyltransferase.